The primary structure comprises 192 residues: Xanthine phosphoribosyltransferase (192 aa).

Xanthine-binding residues include Leu-20 and Asn-27. Residue 128-132 participates in 5-phospho-alpha-D-ribose 1-diphosphate binding; sequence ANGDA. Lys-156 provides a ligand contact to xanthine.

This sequence belongs to the purine/pyrimidine phosphoribosyltransferase family. Xpt subfamily. As to quaternary structure, homodimer.

It localises to the cytoplasm. It catalyses the reaction XMP + diphosphate = xanthine + 5-phospho-alpha-D-ribose 1-diphosphate. Its pathway is purine metabolism; XMP biosynthesis via salvage pathway; XMP from xanthine: step 1/1. Its function is as follows. Converts the preformed base xanthine, a product of nucleic acid breakdown, to xanthosine 5'-monophosphate (XMP), so it can be reused for RNA or DNA synthesis. The sequence is that of Xanthine phosphoribosyltransferase from Staphylococcus epidermidis (strain ATCC 35984 / DSM 28319 / BCRC 17069 / CCUG 31568 / BM 3577 / RP62A).